Reading from the N-terminus, the 2835-residue chain is MTFVRNKEMHNSSVQEDQWPLIGTQQGIWFAEQMMPNPEQFNVAHYVVIQGQIDIELFSNAVAIGLQGVDSLHCHYLESDGSVRQQFYPADEEGQWLESSTFHKPPCQKSRLGKWMKHDLRSGWTFSKKERFRHCLIDVGSSNAPQWFWYQRYHHIDVDGFSVNAISQYICQLYKHWRIGAAKPQEFSAFSDVIQEYQQFLDSAARQQAYDFWQTQAAHLPNVISLTTGSAANTSSSTITHTVPLIGGEWLTRYNPQLLPAELAMAMVFAYLHLHSGQEQVCVGVPFMRRMGNAATCAAGAVVNVLPVALSLHPQMSIIDVAREMNKTIRQVRRHQMYDAEQIQRDLGLVGQPLYGPILNFKPFEAALSLSGVETETHILSAGPIDEIEFSPVLDGQTLSVNITANSTKYSQESLELHAARFVAMVEQIANHPTQPLDLVELIPPSEKQQITLWSVGPQHEHGTEQTVLDVWQQTVESKPNEDALVFKQQRWTFDAFNHLIETRADQLITAGLRQGDIAGVALRRGPESVVTMLAILRAGAIYLPIDLDYPIERIESIVEQARPWCLVVEEDEQNMAYSSISYVPRFIALPELARIHTAPQPKPTISHSDVAYIIFTSGSTGHPKGVMNTHGALLNLLRSHQGSIFSAAIRKLATRRQLPEQAITVRAAHTTSFSFDASWEQVLWMLSGHTMYLYDDEQRKDAYELVQCVAEDNIDALDLPPSLFDQMLDSGLITNDHVPTLVLIGSEAIPQKLWSRVSEFPELLVENFYGPTEFTVDAISASLDADASPVIGRPIAGACVYVLDENLEPVAIGEVGELYLSGAGLAKGYLNQPSMTAERFVANPFAYGKIMYRTGDLVKWRDNGLLDFVGRCDHQIKIRGFRIELGDVESAINAIDGVNTTVVVAEPVGDTHRLLAYCTLEKGAQGESVQPAFTEQRLQSLIAQALPDYMQPANVMILDAFSLNVNGKIDRKALPKYSAGMRSERVAPITQPEQLLCDAITELLGVSDVGMSDDFFNLGGDSISAMSLGTRLRTAGYDLRPKAIFAARQLGMMAGQMVPLQQQQREKQEGIIRPLPMWQWFEETFSITTSYVQSVLVEVESDTQLAHLQASLVQLVANHSVCRLVQKEQQYHIEALQNLDVKNWVESVSVERLDGQRWWTVCLAQRSQSMSISSGQLLRLVMITERSGRKISDLAHHFLIDGVSWRICFRSCRHLTQAQVTGEVAVISEEVTGIHCWSKALYQHLAVAAAQMPFWRAQAQRAVAPIKDPVDKIRMTHWRTPLSHAVTQPLLELPTHQTNLDIEEMLLAAVTGVIARLYGCEEIKVNVESHGREECKEEIDLNQTLGWFTTEYPLIINVPKQGDYRERLREVKQSKRSVKDKGLGYMVLRYLDNPYRDELRTLANTRQPSLLFNYLGRFQSSDGQWSPQQYSGQFADTFAVTLNSERALQHPLELNIFVEESATPRLVLNWSWNAHLFSQQEMVSLSQQIESELLKIQQALQVGDSAELDLSVPADYTEPGITLRQASLLQHHYGKLADVLPALPLQEGLLFQSQLGDKNSSYNSTTRLTFQGQLSEHRVSEALNAVIRRHPQLLARFDSSILGRTVQVMTQVNPSWPLTRYDITNMSGDEQSALIDQLEKQELSRQFDLNDSTHSLLQAQLIFHGDQQSTLLLSAHHLVVDGWSTPILLNDFLSAYAQGVSNLPPVTVGYAHVVSQLTQRDKTVATELWGKVLADVQPSMAFDDIPLSEEVNEHQLWLSKHKTDQLNQCLRHHGLTMSTLMQGLWASILASMTGREEVVFGTPISGRFSRIAGIDEQIGLFSNTVPVRVTLQPHLSLSEQLEAHQAIQIQLLEHDELGLGEIQQLVGGKTLFDTLLVVENYPDHSRWYQQDFSGAKLMAIHNRGYTHYPLTILVLPGEQLHILFEYRDRVGVAKQIVQRFEQMLDEFMVSSDKPFAEWDLRLSGEIELQQRVNQTKTAVERTTLRDLMITQQQRSPHQLALIDSEHRFTYQALAEQVAAIADLLLQQGIKAGDIVAVALPRSATLSLAIYSIIECGAAYLPLDVGYPDERLAYMINDAKPALIITCSSFTSRFEALAALLLLDKLPAPVRAERQNRADGLTPSNAAYLLYTSGSTGNPKGVLVSHQAIVNRLKWMQHQYPLNSEDVVLQKTPCSFDVSVWEFFWPLLEGASLVMAPAEAHKDPEWLLQIIDDYHVTTMHFVPSMLAAFMASIEATHPTGFTVAPSLKQVFCSGEALAKELCHQYARRINAPLHNLYGPTEAAVDVTYYPAYGEALNASVGRSAPIGLPVWNTQVYVLDSFLRAVPIGVPGELYLAGEQLAIGYFNRSALTADRFIANPFTCGERMYRTGDVVRWLACGSIEYLGRSDDQIKIRGQRVELGEIGSALQALPAVKQAVVCAQTLSTHSGMLGADERQIIGYVIAHDMSVTNGEKLRTELSEHLPAHMVPAAIVLLDHYPLSANGKLDKKALPRPNDVAVRVGRNAHPGLETQLVTLFAQVLAVETLFADDDFLTLGGHSLLAMKLAADIRRALNLPVTVGQIMVNPTVEKLASLLLDDDAFNDPTLAGFGEVLPIRAGSGPALFCVNSASGFAWQYTGLPKYLTGHYPIYGLQSPRPGGAMATSETMEEVCDRLLPVLREIQPFGPYHLLGYSFGGIVAQKLAAKLQQQGEEVHFLGLLDTYPPEGQNWDGPMDEEKQYEIEREKEQFLAINELTDIELDEQRLAMFNEITANYEDAVRLLAQAQTSDYQGPAHLFVAQRTVPDGYDIDAHWQSFVGQLIKHQFDCSHEDILAPENVRQIGECLNTLLESKAALKK.

A condensation 1 region spans residues 16–452; the sequence is EDQWPLIGTQ…IPPSEKQQIT (437 aa). Residues 473 to 880 form an adenylation 1 region; it reads QQTVESKPNE…GRCDHQIKIR (408 aa). The 75-residue stretch at 988–1062 folds into the Carrier 1 domain; that stretch reads APITQPEQLL…MMAGQMVPLQ (75 aa). S1023 carries the O-(pantetheine 4'-phosphoryl)serine modification. Condensation stretches follow at residues 1081–1499 and 1539–1961; these read WFEE…KIQQ and DVLP…EWDL. The tract at residues 1992–2394 is adenylation 2; the sequence is QQQRSPHQLA…GRSDDQIKIR (403 aa). The Carrier 2 domain occupies 2503 to 2578; sequence NAHPGLETQL…KLASLLLDDD (76 aa). S2538 carries the post-translational modification O-(pantetheine 4'-phosphoryl)serine. A thioesterase region spans residues 2601–2821; that stretch reads ALFCVNSASG…APENVRQIGE (221 aa).

Belongs to the NRP synthetase family. Requires pantetheine 4'-phosphate as cofactor.

The enzyme catalyses holo-[peptidyl-carrier protein] + L-arginine + ATP = L-arginyl-[peptidyl-carrier protein] + AMP + diphosphate. It carries out the reaction holo-[peptidyl-carrier protein] + L-serine + ATP = L-seryl-[peptidyl-carrier protein] + AMP + diphosphate. It functions in the pathway siderophore biosynthesis. Involved in the synthesis of the siderophore vanchrobactin. Probably adenylates L-arginine via its first adenylation domain and loads it onto its first peptidyl carrier domain via a thioester linkage to the phosphopanthetheine moiety. In addition, may adenylate L-serine via its second adenylation domain and loads it onto its second peptidyl carrier domain via a thioester linkage to the phosphopanthetheine moiety. The thioesterase domain may release vanchrobactin after condensation of the siderophore components. The chain is Vanchrobactin synthetase VabF from Vibrio anguillarum (Listonella anguillarum).